Here is an 888-residue protein sequence, read N- to C-terminus: uncharacterized protein (888 aa).

The signal sequence occupies residues 1–20; the sequence is MKILKSLVLLVLFIVMPAKA. 6 consecutive transmembrane segments (helical) span residues 513–533, 565–585, 611–631, 649–669, 682–702, and 781–801; these read IVKA…VAGA, TYFF…VVGA, LLFI…IITI, VIAF…IILM, ISTL…FLLI, and LLFY…NIVV.

It belongs to the TrbL/VirB6 family.

The protein resides in the cell membrane. This is an uncharacterized protein from Rickettsia prowazekii (strain Madrid E).